The following is a 160-amino-acid chain: SsrA-binding protein (160 aa).

This sequence belongs to the SmpB family.

Its subcellular location is the cytoplasm. In terms of biological role, required for rescue of stalled ribosomes mediated by trans-translation. Binds to transfer-messenger RNA (tmRNA), required for stable association of tmRNA with ribosomes. tmRNA and SmpB together mimic tRNA shape, replacing the anticodon stem-loop with SmpB. tmRNA is encoded by the ssrA gene; the 2 termini fold to resemble tRNA(Ala) and it encodes a 'tag peptide', a short internal open reading frame. During trans-translation Ala-aminoacylated tmRNA acts like a tRNA, entering the A-site of stalled ribosomes, displacing the stalled mRNA. The ribosome then switches to translate the ORF on the tmRNA; the nascent peptide is terminated with the 'tag peptide' encoded by the tmRNA and targeted for degradation. The ribosome is freed to recommence translation, which seems to be the essential function of trans-translation. The polypeptide is SsrA-binding protein (Yersinia pseudotuberculosis serotype O:1b (strain IP 31758)).